Here is a 569-residue protein sequence, read N- to C-terminus: Methionine--tRNA ligase (569 aa).

The 'HIGH' region signature appears at 11-21; it reads PYINGVKHLGN. C143, C146, C156, and C159 together coordinate Zn(2+). Positions 342-346 match the 'KMSKS' region motif; it reads KFSTS. T345 provides a ligand contact to ATP.

Belongs to the class-I aminoacyl-tRNA synthetase family. MetG type 1 subfamily. As to quaternary structure, monomer. The cofactor is Zn(2+).

It localises to the cytoplasm. It catalyses the reaction tRNA(Met) + L-methionine + ATP = L-methionyl-tRNA(Met) + AMP + diphosphate. Is required not only for elongation of protein synthesis but also for the initiation of all mRNA translation through initiator tRNA(fMet) aminoacylation. The chain is Methionine--tRNA ligase from Caulobacter sp. (strain K31).